A 178-amino-acid polypeptide reads, in one-letter code: Alkyl hydroperoxide reductase AhpD (178 aa).

The active-site Proton donor is Cys130. A disulfide bond links Cys130 and Cys133. Residue Cys133 is the Cysteine sulfenic acid (-SOH) intermediate of the active site.

The protein belongs to the AhpD family. Homotrimer.

The catalysed reaction is N(6)-[(R)-dihydrolipoyl]-L-lysyl-[lipoyl-carrier protein] + a hydroperoxide = N(6)-[(R)-lipoyl]-L-lysyl-[lipoyl-carrier protein] + an alcohol + H2O. Functionally, antioxidant protein with alkyl hydroperoxidase activity. Required for the reduction of the AhpC active site cysteine residues and for the regeneration of the AhpC enzyme activity. In Mycobacterium ulcerans (strain Agy99), this protein is Alkyl hydroperoxide reductase AhpD.